The sequence spans 175 residues: Ribosome maturation factor RimM (175 aa).

Positions 99–172 (EGEFHLLDLV…WLRLTPPPGL (74 aa)) constitute a PRC barrel domain.

This sequence belongs to the RimM family. Binds ribosomal protein uS19.

It localises to the cytoplasm. An accessory protein needed during the final step in the assembly of 30S ribosomal subunit, possibly for assembly of the head region. Essential for efficient processing of 16S rRNA. May be needed both before and after RbfA during the maturation of 16S rRNA. It has affinity for free ribosomal 30S subunits but not for 70S ribosomes. The polypeptide is Ribosome maturation factor RimM (Synechococcus sp. (strain WH7803)).